Consider the following 99-residue polypeptide: Cyclin-dependent protein kinase inhibitor SMR7 (99 aa).

A disordered region spans residues 49–70 (ICITPTARGAKTPECPAAPRKR).

As to expression, expressed in root meristems after induction.

In terms of biological role, probable cyclin-dependent protein kinase (CDK) inhibitor that functions as a repressor of mitosis in the endoreduplication cell cycle. Acts as a potent cell cycle inhibitor, regulating a hydroxyurea-dependent checkpoint in leaves. In Arabidopsis thaliana (Mouse-ear cress), this protein is Cyclin-dependent protein kinase inhibitor SMR7.